The sequence spans 504 residues: Ent-kaurene oxidase-like 3 (504 aa).

The chain crosses the membrane as a helical span at residues Ser-3–Ile-23. Cys-448 serves as a coordination point for heme.

Belongs to the cytochrome P450 family. It depends on heme as a cofactor. Expressed in leaf blades.

It is found in the membrane. May hydroxylate diterpenes. The chain is Ent-kaurene oxidase-like 3 from Oryza sativa subsp. japonica (Rice).